Consider the following 371-residue polypeptide: GDP-mannose 3,5-epimerase 2 (371 aa).

Residues 29–55, Asp53, and Asp73 each bind NAD(+); that span reads GAGG…SDWK. Residues Gly98 and 138 to 140 contribute to the substrate site; that span reads SAC. Positions 168 and 172 each coordinate NAD(+). The Proton acceptor role is filled by Tyr168. Substrate is bound by residues Asn197, 210-212, Lys219, 235-237, Arg300, and Ser350; these read EKA and QTR.

The protein belongs to the NAD(P)-dependent epimerase/dehydratase family. It depends on NAD(+) as a cofactor.

It catalyses the reaction GDP-alpha-D-mannose = GDP-beta-L-gulose. It carries out the reaction GDP-beta-L-gulose = GDP-beta-L-galactose. It participates in cofactor biosynthesis; L-ascorbate biosynthesis via GDP-alpha-D-mannose pathway; L-ascorbate from GDP-alpha-D-mannose: step 1/5. Its function is as follows. Catalyzes a reversible epimerization of GDP-D-mannose that precedes the committed step in the biosynthesis of vitamin C (L-ascorbate), resulting in the hydrolysis of the highly energetic glycosyl-pyrophosphoryl linkage. Able to catalyze 2 distinct epimerization reactions and can release both GDP-L-galactose and GDP-L-gulose from GDP-mannose. In Oryza sativa subsp. japonica (Rice), this protein is GDP-mannose 3,5-epimerase 2 (GME-2).